The chain runs to 632 residues: Signal-transduction and transcriptional-control protein (632 aa).

Positions Thr197 to Met270 constitute a PAS domain. The region spanning Ile324–Asn554 is the Sigma-54 factor interaction domain. ATP is bound by residues Gly352–Glu359 and Ala416–Glu425. Residues Ile606–Lys625 constitute a DNA-binding region (H-T-H motif).

This chain is Signal-transduction and transcriptional-control protein (stc), found in Clostridium beijerinckii (Clostridium MP).